We begin with the raw amino-acid sequence, 184 residues long: Interferon alpha-1 (184 aa).

The signal sequence occupies residues 1-23; sequence MALPVSLLMALVVLSCHSICSLG. 2 cysteine pairs are disulfide-bonded: Cys-24/Cys-122 and Cys-52/Cys-162.

The protein belongs to the alpha/beta interferon family. As to quaternary structure, interacts with CR2.

The protein localises to the secreted. Functionally, produced by macrophages, IFN-alpha have antiviral activities. Interferon stimulates the production of two enzymes: a protein kinase and an oligoadenylate synthetase. The sequence is that of Interferon alpha-1 from Equus caballus (Horse).